Reading from the N-terminus, the 289-residue chain is Xylosylprotein 4-beta-galactosyltransferase (289 aa).

The Cytoplasmic portion of the chain corresponds to 1–6 (MKLKTR). The chain crosses the membrane as a helical; Signal-anchor for type II membrane protein span at residues 7 to 27 (LILSGTILISLAACYFLVLLV). Residues 28–289 (LDLEITRDLM…DLNWTPYCKS (262 aa)) are Lumenal-facing. A UDP-alpha-D-galactose-binding site is contributed by 58 to 62 (PYRDR). N-linked (GlcNAc...) asparagine glycans are attached at residues asparagine 81 and asparagine 90. UDP-alpha-D-galactose contacts are provided by residues 97–99 (FNR), 123–124 (VD), tyrosine 154, and tryptophan 184. Aspartate 124 provides a ligand contact to Mn(2+). 186-189 (LEDD) provides a ligand contact to N-acetyl-D-glucosamine. N-linked (GlcNAc...) asparagine glycosylation is present at asparagine 201. The tract at residues 214–236 (NTFRHIHGPKRKRDYTPKKNDKN) is disordered. Over residues 217–226 (RHIHGPKRKR) the composition is skewed to basic residues. Mn(2+) is bound at residue histidine 218. 218-220 (HIH) is a UDP-alpha-D-galactose binding site. Basic and acidic residues predominate over residues 227–236 (DYTPKKNDKN).

The protein belongs to the glycosyltransferase 7 family. The cofactor is Mn(2+).

It is found in the membrane. The enzyme catalyses 3-O-(beta-D-xylosyl)-L-seryl-[protein] + UDP-alpha-D-galactose = 3-O-(beta-D-galactosyl-(1-&gt;4)-beta-D-xylosyl)-L-seryl-[protein] + UDP + H(+). Its pathway is protein modification; protein glycosylation. Its function is as follows. Glycosyltransferase required for the biosynthesis of the tetrasaccharide (GlcA-Gal-Gal-Xyl-)Ser core linker of heparan sulfate and chondroitin sulfate. Required for embryonic development. Involved in vulval epithelium invagination. Required for axon regeneration after injury. This is Xylosylprotein 4-beta-galactosyltransferase (sqv-3) from Caenorhabditis elegans.